Consider the following 242-residue polypeptide: 3-deoxy-manno-octulosonate cytidylyltransferase (242 aa).

It belongs to the KdsB family.

The protein localises to the cytoplasm. It catalyses the reaction 3-deoxy-alpha-D-manno-oct-2-ulosonate + CTP = CMP-3-deoxy-beta-D-manno-octulosonate + diphosphate. The protein operates within nucleotide-sugar biosynthesis; CMP-3-deoxy-D-manno-octulosonate biosynthesis; CMP-3-deoxy-D-manno-octulosonate from 3-deoxy-D-manno-octulosonate and CTP: step 1/1. It participates in bacterial outer membrane biogenesis; lipopolysaccharide biosynthesis. Activates KDO (a required 8-carbon sugar) for incorporation into bacterial lipopolysaccharide in Gram-negative bacteria. The sequence is that of 3-deoxy-manno-octulosonate cytidylyltransferase from Anaeromyxobacter sp. (strain K).